We begin with the raw amino-acid sequence, 237 residues long: Phosphoribosylaminoimidazole-succinocarboxamide synthase (237 aa).

This sequence belongs to the SAICAR synthetase family.

It carries out the reaction 5-amino-1-(5-phospho-D-ribosyl)imidazole-4-carboxylate + L-aspartate + ATP = (2S)-2-[5-amino-1-(5-phospho-beta-D-ribosyl)imidazole-4-carboxamido]succinate + ADP + phosphate + 2 H(+). It functions in the pathway purine metabolism; IMP biosynthesis via de novo pathway; 5-amino-1-(5-phospho-D-ribosyl)imidazole-4-carboxamide from 5-amino-1-(5-phospho-D-ribosyl)imidazole-4-carboxylate: step 1/2. In Pectobacterium atrosepticum (strain SCRI 1043 / ATCC BAA-672) (Erwinia carotovora subsp. atroseptica), this protein is Phosphoribosylaminoimidazole-succinocarboxamide synthase.